The primary structure comprises 462 residues: Nuclear distribution protein PAC1 (462 aa).

The LisH domain occupies Gln-9–Ala-41. Residues Thr-60–Thr-87 adopt a coiled-coil conformation. Positions Ser-78–Ser-99 are enriched in polar residues. The tract at residues Ser-78 to Pro-103 is disordered. 8 WD repeats span residues Ser-113–Lys-154, His-156–Arg-196, Gly-200–Thr-247, Gly-250–Thr-289, Gly-292–Leu-352, Gly-354–Lys-393, Ala-398–Arg-445, and Val-447–Ser-462. The tract at residues Lys-414 to Lys-434 is disordered.

The protein belongs to the WD repeat LIS1/nudF family. As to quaternary structure, self-associates. Interacts with NDL1 and dynein.

Its subcellular location is the cytoplasm. It localises to the cytoskeleton. The protein localises to the spindle pole. Functionally, positively regulates the activity of the minus-end directed microtubule motor protein dynein. May enhance dynein-mediated microtubule sliding by targeting dynein to the microtubule plus end. Required for nuclear migration during vegetative growth as well as development. Required for retrograde early endosome (EE) transport from the hyphal tip. Required for localization of dynein to the mitotic spindle poles. Recruits additional proteins to the dynein complex at SPBs. The protein is Nuclear distribution protein PAC1 of Phaeosphaeria nodorum (strain SN15 / ATCC MYA-4574 / FGSC 10173) (Glume blotch fungus).